Here is a 194-residue protein sequence, read N- to C-terminus: Probable GTP-binding protein EngB (194 aa).

An EngB-type G domain is found at 22–194; sequence DLPEFALAGR…KFWDWIEDKM (173 aa). Residues 30–37, 57–61, 75–78, 142–145, and 175–177 each bind GTP; these read GRSNVGKS, GKTQT, DVPG, TKMD, and FSS. The Mg(2+) site is built by Ser-37 and Thr-59.

This sequence belongs to the TRAFAC class TrmE-Era-EngA-EngB-Septin-like GTPase superfamily. EngB GTPase family. Mg(2+) is required as a cofactor.

In terms of biological role, necessary for normal cell division and for the maintenance of normal septation. The chain is Probable GTP-binding protein EngB from Lactobacillus gasseri (strain ATCC 33323 / DSM 20243 / BCRC 14619 / CIP 102991 / JCM 1131 / KCTC 3163 / NCIMB 11718 / NCTC 13722 / AM63).